Here is a 247-residue protein sequence, read N- to C-terminus: Coproheme decarboxylase (247 aa).

Fe-coproporphyrin III is bound by residues arginine 129, 143–147 (YPMDK), histidine 170, glutamine 183, and serine 221. Residue tyrosine 143 is part of the active site.

It belongs to the ChdC family. Type 1 subfamily. Fe-coproporphyrin III is required as a cofactor.

It carries out the reaction Fe-coproporphyrin III + 2 H2O2 + 2 H(+) = heme b + 2 CO2 + 4 H2O. The enzyme catalyses Fe-coproporphyrin III + H2O2 + H(+) = harderoheme III + CO2 + 2 H2O. It catalyses the reaction harderoheme III + H2O2 + H(+) = heme b + CO2 + 2 H2O. Its pathway is porphyrin-containing compound metabolism; protoheme biosynthesis. Functionally, involved in coproporphyrin-dependent heme b biosynthesis. Catalyzes the decarboxylation of Fe-coproporphyrin III (coproheme) to heme b (protoheme IX), the last step of the pathway. The reaction occurs in a stepwise manner with a three-propionate intermediate. This is Coproheme decarboxylase from Bacillus anthracis.